We begin with the raw amino-acid sequence, 640 residues long: Probable inactive receptor kinase At3g08680 (640 aa).

A signal peptide spans 1 to 22 (MMKIIAAFLFLLVTTFVSRCLS). LRR repeat units lie at residues 93–115 (ALRIISLRSNHLQGNIPSVILSL), 117–138 (FIRSLYFHENNFSGTIPPVLSH), 139–162 (RLVNLDLSANSLSGNIPTSLQNLT), 163–185 (QLTDLSLQNNSLSGPIPNLPPRL), and 186–206 (KYLNLSFNNLNGSVPSSVKSF). The disordered stretch occupies residues 222-249 (LTPCPENTTAPSPSPTTPTEGPGTTNIG). The span at 226–247 (PENTTAPSPSPTTPTEGPGTTN) shows a compositional bias: low complexity. Residues 260-280 (GAIVGIAVGGSVLLFIILAII) form a helical membrane-spanning segment. The segment at 289-315 (DGGQDSTAVPKAKPGRSDNKAEEFGSG) is disordered. The Protein kinase domain maps to 341 to 614 (RASAEVLGKG…EEVVNMMEEI (274 aa)). Residue serine 343 is modified to Phosphoserine. 347 to 355 (LGKGSYGTT) is an ATP binding site. A Phosphothreonine modification is found at threonine 364. Lysine 369 provides a ligand contact to ATP. A phosphothreonine mark is found at threonine 441, threonine 514, and threonine 564. The disordered stretch occupies residues 612–640 (EEIRPSGSGPGSGNRASSPEMIRSSDSPV).

Belongs to the protein kinase superfamily. Tyr protein kinase family.

The protein localises to the membrane. This Arabidopsis thaliana (Mouse-ear cress) protein is Probable inactive receptor kinase At3g08680.